Consider the following 332-residue polypeptide: Cysteine and histidine-rich domain-containing protein 1 (332 aa).

The residue at position 2 (alanine 2) is an N-acetylalanine. Positions 2–77 (ALLCYNRGCG…KPPESVKPEV (76 aa)) are interaction with PPP5C. Residues cysteine 5, cysteine 10, cysteine 24, histidine 27, cysteine 42, and cysteine 43 each coordinate Zn(2+). CHORD domains follow at residues 5-64 (CYNR…KGRH) and 157-216 (CKNG…KGKH). Threonine 47 is subject to Phosphothreonine. Serine 51 carries the phosphoserine modification. The Zn(2+) site is built by cysteine 59, histidine 64, cysteine 157, cysteine 162, cysteine 176, histidine 179, cysteine 194, cysteine 195, cysteine 211, and histidine 216. Positions 62-81 (GRHNSEKPPESVKPEVKTTE) are disordered. Over residues 64-81 (HNSEKPPESVKPEVKTTE) the composition is skewed to basic and acidic residues. An interaction with HSP90AA1 and HSP90AB1 region spans residues 65 to 316 (NSEKPPESVK…AEPMQWASLE (252 aa)). The CS domain occupies 227 to 316 (VVPCRHDWHQ…AEPMQWASLE (90 aa)).

As to quaternary structure, interacts with HSP90AA1, HSP90AB1, PPP5C, ROCK1 and ROCK2.

Functionally, regulates centrosome duplication, probably by inhibiting the kinase activity of ROCK2. Proposed to act as co-chaperone for HSP90. May play a role in the regulation of NOD1 via a HSP90 chaperone complex. In vitro, has intrinsic chaperone activity. This function may be achieved by inhibiting association of ROCK2 with NPM1. Plays a role in ensuring the localization of the tyrosine kinase receptor EGFR to the plasma membrane, and thus ensures the subsequent regulation of EGFR activity and EGF-induced actin cytoskeleton remodeling. Involved in stress response. Prevents tumorigenesis. This chain is Cysteine and histidine-rich domain-containing protein 1 (CHORDC1), found in Pongo abelii (Sumatran orangutan).